We begin with the raw amino-acid sequence, 587 residues long: MDEEENSEINSVQARNEDVQLEDQSQSQGLQDRQVDAIEQAWNDAMPDEPSPPAEYAFHDPLAIVGEGGDAPEAMVEDVLQDDTASEGSHPSSDMSLESPGSEDDSDVQGLPNWMIPQNRLRSAVDMMVSQARNRDGGIAALLSGDNFLQRVRSMVFSQERRRSRTSEETSQEEAAEEPDDPPPQQPPLPPIDIGFDTNLPAEHSYFGNHLSRVPGVDYLEVGSVHHMLIFLHHHILFPGEVLPFMIDGQMFDDDMPGLDGLIFGVSFPRLQPPEDNPHKLYGVTCQIYERGESGRGLVFYKSRALQRIVINCDDIKGSPQYIARNPTNKCFSNVKILPEYFLPEPLQSVDMGSMARFRDIPSMRDKYRRFQLSTTTWPSDACQEYSFGSIVERARQRLESQKIDTMPKCPIQLSFWLVRNLHLTEKMMRLTFLTDSVNTRLQLIKSTFKDETLFFCRYCNSSLALCSDLFAMSKHGVQTQYCNPEGYIHETNTVYRVISHAIGYSGEPSTKFSWFPGYQWHIILCKFCAQHVGWEFKAVLPNLTPNVFFGLSGSSVRIGKASEYSPFNGTTYVVRNMLRMISSDME.

Disordered stretches follow at residues 1–56 (MDEE…PAEY), 78–113 (DVLQ…GLPN), and 157–195 (FSQE…IDIG). Composition is skewed to polar residues over residues 22–31 (EDQSQSQGLQ) and 86–96 (SEGSHPSSDMS). The span at 159–168 (QERRRSRTSE) shows a compositional bias: basic and acidic residues. Residues 170–181 (TSQEEAAEEPDD) show a composition bias toward acidic residues. A compositionally biased stretch (pro residues) spans 182 to 191 (PPPQQPPLPP). Positions 227 to 453 (HMLIFLHHHI…LIKSTFKDET (227 aa)) constitute a Lon N-terminal domain. The CULT domain maps to 452–561 (ETLFFCRYCN…LSGSSVRIGK (110 aa)). Positions 457, 460, 526, and 529 each coordinate Zn(2+).

Belongs to the CRBN family. Likely a component of a DCX (DDB1-CUL4-X-box) protein ligase complex. May interact with pic/DDB1. In terms of processing, ubiquitinated.

The protein resides in the nucleus. The protein operates within protein modification; protein ubiquitination. In terms of biological role, substrate recognition component of a DCX (DDB1-CUL4-X-box) E3 protein ligase complex that mediates the ubiquitination and subsequent proteasomal degradation of target proteins. Has an essential role in mediating growth by negatively regulating insulin signaling. It also has a role in maintaining presynaptic function in the neuromuscular junction synapses of third-instar larvae. The sequence is that of Protein cereblon from Drosophila simulans (Fruit fly).